Consider the following 222-residue polypeptide: Phosphoribosylformylglycinamidine synthase subunit PurQ (222 aa).

One can recognise a Glutamine amidotransferase type-1 domain in the interval 3–222; that stretch reads AAVVVFPGSN…RALAGALTPA (220 aa). The Nucleophile role is filled by Cys-86. Catalysis depends on residues His-194 and Glu-196.

In terms of assembly, part of the FGAM synthase complex composed of 1 PurL, 1 PurQ and 2 PurS subunits.

It is found in the cytoplasm. The enzyme catalyses N(2)-formyl-N(1)-(5-phospho-beta-D-ribosyl)glycinamide + L-glutamine + ATP + H2O = 2-formamido-N(1)-(5-O-phospho-beta-D-ribosyl)acetamidine + L-glutamate + ADP + phosphate + H(+). It carries out the reaction L-glutamine + H2O = L-glutamate + NH4(+). Its pathway is purine metabolism; IMP biosynthesis via de novo pathway; 5-amino-1-(5-phospho-D-ribosyl)imidazole from N(2)-formyl-N(1)-(5-phospho-D-ribosyl)glycinamide: step 1/2. Functionally, part of the phosphoribosylformylglycinamidine synthase complex involved in the purines biosynthetic pathway. Catalyzes the ATP-dependent conversion of formylglycinamide ribonucleotide (FGAR) and glutamine to yield formylglycinamidine ribonucleotide (FGAM) and glutamate. The FGAM synthase complex is composed of three subunits. PurQ produces an ammonia molecule by converting glutamine to glutamate. PurL transfers the ammonia molecule to FGAR to form FGAM in an ATP-dependent manner. PurS interacts with PurQ and PurL and is thought to assist in the transfer of the ammonia molecule from PurQ to PurL. In Ruegeria pomeroyi (strain ATCC 700808 / DSM 15171 / DSS-3) (Silicibacter pomeroyi), this protein is Phosphoribosylformylglycinamidine synthase subunit PurQ.